The chain runs to 101 residues: Small ribosomal subunit protein uS14 (101 aa).

This sequence belongs to the universal ribosomal protein uS14 family. Part of the 30S ribosomal subunit. Contacts proteins S3 and S10.

Functionally, binds 16S rRNA, required for the assembly of 30S particles and may also be responsible for determining the conformation of the 16S rRNA at the A site. This Polaromonas sp. (strain JS666 / ATCC BAA-500) protein is Small ribosomal subunit protein uS14.